The sequence spans 253 residues: MRFDILTLFPAMFQGPLTESILKRAQQAGRIEIHLHDIRQWTTDRHRTADDTPYGGGAGMVMKAEPLAAAIRAVRAADERPGVTILLTPDGELLTQQIVRELATLPRLLLVCGHYEGIDERVRETLIDRELSIGDYVLTGGELAAMVVVDAVARLVPGVIDSESIVEESHSDFLLEYPHYTRPAVWEGRAVPPVLLSGHHGEIARWRRAERLRRTLVRRPDLLARAAAAGVLTKADLALLAELGWRPETSNGA.

Residues Gly113 and Ile133 to Leu138 each bind S-adenosyl-L-methionine.

This sequence belongs to the RNA methyltransferase TrmD family. Homodimer.

The protein resides in the cytoplasm. It catalyses the reaction guanosine(37) in tRNA + S-adenosyl-L-methionine = N(1)-methylguanosine(37) in tRNA + S-adenosyl-L-homocysteine + H(+). Specifically methylates guanosine-37 in various tRNAs. The chain is tRNA (guanine-N(1)-)-methyltransferase from Chloroflexus aurantiacus (strain ATCC 29366 / DSM 635 / J-10-fl).